The primary structure comprises 177 residues: Insertion element IS1223 uncharacterized 20.7 kDa protein (177 aa).

A disordered region spans residues 112–131; that stretch reads KQKGRPRKVPKKSKKTTKKL. Basic residues predominate over residues 113-128; it reads QKGRPRKVPKKSKKTT.

Belongs to the IS150/IS1296 orfA family.

This is Insertion element IS1223 uncharacterized 20.7 kDa protein from Lactobacillus johnsonii.